The primary structure comprises 815 residues: (-)-kolavenyl diphosphate synthase TPS14, chloroplastic (815 aa).

Residues 1 to 51 constitute a chloroplast transit peptide; the sequence is MFMSSSSSSHARRPQLSSFSYLHPPLPFPGLSFFNTRDKRVNFDSTRIICI. Lys-247 provides a ligand contact to substrate. Mg(2+) contacts are provided by Asp-379 and Asp-381. Positions 379 to 382 match the DXDD motif motif; it reads DIDD. Substrate is bound at residue Lys-465.

The protein belongs to the terpene synthase family. Tpsc subfamily. The cofactor is Mg(2+).

The protein resides in the plastid. It is found in the chloroplast. It catalyses the reaction (2E,6E,10E)-geranylgeranyl diphosphate = (-)-kolavenyl diphosphate. Inhibited by high concentrations of magnesium. Functionally, diterpene synthase that catalyzes the formation of (-)-kolavenyl diphosphate from geranylgeranyl diphosphate (GGPP). This is (-)-kolavenyl diphosphate synthase TPS14, chloroplastic from Tripterygium wilfordii (Thunder God vine).